The following is a 153-amino-acid chain: Gamma-glutamylaminecyclotransferase (153 aa).

7–10 (YGTL) is a substrate binding site. Glutamate 82 functions as the Proton acceptor in the catalytic mechanism. A disordered region spans residues 130-153 (QLPHHDSYDSEGPHGLRYNPRENR). Over residues 132–153 (PHHDSYDSEGPHGLRYNPRENR) the composition is skewed to basic and acidic residues.

It belongs to the gamma-glutamylcyclotransferase family. As to quaternary structure, monomer.

The enzyme catalyses epsilon-(gamma-L-glutamyl)-L-lysine = 5-oxo-L-proline + L-lysine. Functionally, contributes to degradation of proteins cross-linked by transglutaminases by degrading the cross-link between a lysine and a glutamic acid residue. Catalyzes the formation of 5-oxo-L-proline from L-gamma-glutamyl-L-epsilon-lysine. Inactive with L-gamma-glutamyl-alpha-amino acid substrates such as L-gamma-glutamyl-L-alpha-cysteine and L-gamma-glutamyl-L-alpha-alanine. In Homo sapiens (Human), this protein is Gamma-glutamylaminecyclotransferase (GGACT).